Consider the following 405-residue polypeptide: Tryptophan synthase beta chain (405 aa).

An N6-(pyridoxal phosphate)lysine modification is found at lysine 98.

It belongs to the TrpB family. Tetramer of two alpha and two beta chains. It depends on pyridoxal 5'-phosphate as a cofactor.

It catalyses the reaction (1S,2R)-1-C-(indol-3-yl)glycerol 3-phosphate + L-serine = D-glyceraldehyde 3-phosphate + L-tryptophan + H2O. It functions in the pathway amino-acid biosynthesis; L-tryptophan biosynthesis; L-tryptophan from chorismate: step 5/5. Functionally, the beta subunit is responsible for the synthesis of L-tryptophan from indole and L-serine. The sequence is that of Tryptophan synthase beta chain from Xanthomonas euvesicatoria pv. vesicatoria (strain 85-10) (Xanthomonas campestris pv. vesicatoria).